The primary structure comprises 836 residues: Neuroligin-2 (836 aa).

An N-terminal signal peptide occupies residues 1 to 14; that stretch reads MWLLALCLVGLAGA. At 15–678 the chain is on the extracellular side; it reads QRGGGGPGGG…DSRDYSTELS (664 aa). N-linked (GlcNAc...) asparagine glycans are attached at residues Asn98 and Asn136. Cystine bridges form between Cys106–Cys141, Cys317–Cys328, and Cys487–Cys521. Asn522 carries N-linked (GlcNAc...) asparagine glycosylation. The segment at 623-661 is disordered; the sequence is PPYATRWPPRTPGPGTSGTRRPPPPATLPPESDIDLGPR. The helical transmembrane segment at 679-699 threads the bilayer; that stretch reads VTVAVGASLLFLNILAFAALY. Residues 679 to 699 are required for interaction with LHFPL4; the sequence is VTVAVGASLLFLNILAFAALY. Over 700-836 the chain is Cytoplasmic; sequence YKRDRRQELR…LPHPHSTTRV (137 aa). Disordered regions lie at residues 711–735 and 791–836; these read RRLS…TAGR and LLPS…TTRV. A phosphoserine mark is found at Ser714 and Ser719. A compositionally biased stretch (gly residues) spans 717–728; the sequence is GGSGSGVPGGGP. Residues 796-819 show a composition bias toward pro residues; that stretch reads LGPPPPPPPPSLHPFGPFPPPPPT. Residues 824-836 are compositionally biased toward polar residues; that stretch reads NNTLPHPHSTTRV.

This sequence belongs to the type-B carboxylesterase/lipase family. Interacts with neurexins NRXN1, NRXN2 and NRXN3. Interaction with neurexins is mediated by heparan sulfate glycan modification on neurexin. Interacts (via its C-terminus) with DLG4/PSD-95 (via PDZ domain 3). Interacts with PATJ. Interacts with MDGA2. Interacts with GPHN. Interacts with MDGA1. Found in a complex with MAGI2 and IGSF9B, where it interacts with MAGI2 (via WW 1, WW 2 and PDZ 2 domains). Identified in a complex of 720 kDa composed of LHFPL4, NLGN2, GABRA1, GABRB2, GABRG2 and GABRB3. Interacts with LHFPL4; leading to mutual regulation of the protein level and synaptic clustering. Interacts with GABRA1. In terms of tissue distribution, brain and arteries. Detected in the retina outer plexiform layer (at protein level). Widely expressed. Detected in heart, brain, spleen, lung, liver, skeletal muscle, kidney and testis.

Its subcellular location is the cell membrane. It is found in the postsynaptic cell membrane. The protein localises to the presynaptic cell membrane. Functionally, transmembrane scaffolding protein involved in cell-cell interactions via its interactions with neurexin family members. Mediates cell-cell interactions both in neurons and in other types of cells, such as Langerhans beta cells. Mediates cell-cell interactions between Langerhans beta cells and modulates insulin secretion. Plays a role in synapse function and synaptic signal transmission, especially via gamma-aminobutyric acid receptors (GABA(A) receptors). Functions by recruiting and clustering synaptic proteins. Promotes clustering of postsynaptic GABRG2 and GPHN. Promotes clustering of postsynaptic LHFPL4. Modulates signaling by inhibitory synapses, and thereby plays a role in controlling the ratio of signaling by excitatory and inhibitory synapses and information processing. Required for normal signal amplitude from inhibitory synapses, but is not essential for normal signal frequency. May promote the initial formation of synapses, but is not essential for this. In vitro, triggers the de novo formation of presynaptic structures. This is Neuroligin-2 (Nlgn2) from Mus musculus (Mouse).